The sequence spans 180 residues: Adenine phosphoribosyltransferase (180 aa).

Belongs to the purine/pyrimidine phosphoribosyltransferase family. As to quaternary structure, homodimer.

It localises to the cytoplasm. The catalysed reaction is AMP + diphosphate = 5-phospho-alpha-D-ribose 1-diphosphate + adenine. It functions in the pathway purine metabolism; AMP biosynthesis via salvage pathway; AMP from adenine: step 1/1. Functionally, catalyzes a salvage reaction resulting in the formation of AMP, that is energically less costly than de novo synthesis. The protein is Adenine phosphoribosyltransferase of Agrobacterium fabrum (strain C58 / ATCC 33970) (Agrobacterium tumefaciens (strain C58)).